A 435-amino-acid chain; its full sequence is MVKVVRNVVCPFCGTLCDDLEILVEDNHIVGTRHACRIGNAKFMHFEGAVRYTEPLMRENKKDDFKKVDYETAIEETARLLTEATLPLIYGWSATECHAHMYGVELAELVGAVIDNTASVUHGPSLLAVQDVGYPVCTLGEVKNRADVIIFWGSNPMHAHPRHMSRYSVFARGFFRERGREDRTLIVVDPRETDTAKLADIHLQVEPHKDYELVSAMRAVLKGFELQVDKVAGVPADLIYEAVEVCKNAQFGELFFAMGVTMTRGKHRNIDNAIQLVIDLNAYTKFGLMPMRGHYNVNGFNQVLTWVTGYPFGVDFSRGYPRYNPGETTANDLLQRGETDMMLNIASDPGAHFPQKAVQHMAKIPLVCIDPHETPTTQLANIIIPPAIAGVEVEGTAYRMDGVPIQLRKVIDPPEGVLPDREILKILIKKVKEML.

Sec121 is a non-standard amino acid (selenocysteine).

This sequence belongs to the FwdB family. In terms of assembly, this enzyme is composed of six subunits FwdA, FwdC, FwdD, FwdE, FwdF and FwdG. W-bis(molybdopterin guanine dinucleotide) serves as cofactor.

The catalysed reaction is N-formylmethanofuran + 2 oxidized [2Fe-2S]-[ferredoxin] + H2O = methanofuran + 2 reduced [2Fe-2S]-[ferredoxin] + CO2 + H(+). It participates in one-carbon metabolism; methanogenesis from CO(2); 5,10-methenyl-5,6,7,8-tetrahydromethanopterin from CO(2): step 1/3. Functionally, catalyzes the reversible oxidation of CO(2) and methanofuran (MFR) to N-formylmethanofuran (CHO-MFR). This enzyme is oxygen-labile. The chain is Tungsten-containing formylmethanofuran dehydrogenase 2 subunit B (fwdB) from Methanocaldococcus jannaschii (strain ATCC 43067 / DSM 2661 / JAL-1 / JCM 10045 / NBRC 100440) (Methanococcus jannaschii).